The following is a 217-amino-acid chain: Peroxiredoxin Q, chloroplastic (217 aa).

Residues 1 to 66 (MAFAASTACC…RRRAASTGIV (66 aa)) constitute a chloroplast transit peptide. The 148-residue stretch at 70–217 (VSKGSVPPNF…GETLKIIQNL (148 aa)) folds into the Thioredoxin domain. The Cysteine sulfenic acid (-SOH) intermediate role is filled by cysteine 112. Cysteine 112 and cysteine 117 form a disulfide bridge.

This sequence belongs to the peroxiredoxin family. BCP/PrxQ subfamily. In terms of assembly, monomer.

It is found in the plastid. The protein resides in the chloroplast thylakoid lumen. The enzyme catalyses a hydroperoxide + [thioredoxin]-dithiol = an alcohol + [thioredoxin]-disulfide + H2O. Functionally, thiol-specific peroxidase that catalyzes the reduction of hydrogen peroxide and organic hydroperoxides to water and alcohols, respectively. Plays a role in cell protection against oxidative stress by detoxifying peroxides. The polypeptide is Peroxiredoxin Q, chloroplastic (PRX1) (Triticum aestivum (Wheat)).